Here is a 505-residue protein sequence, read N- to C-terminus: AMP phosphorylase 2 (505 aa).

Residues glycine 169, 195–200 (SRAITT), threonine 204, serine 265, and lysine 289 each bind AMP.

The protein belongs to the thymidine/pyrimidine-nucleoside phosphorylase family. Type 2 subfamily.

It catalyses the reaction AMP + phosphate = alpha-D-ribose 1,5-bisphosphate + adenine. The catalysed reaction is CMP + phosphate = cytosine + alpha-D-ribose 1,5-bisphosphate. The enzyme catalyses UMP + phosphate = alpha-D-ribose 1,5-bisphosphate + uracil. Functionally, catalyzes the conversion of AMP and phosphate to adenine and ribose 1,5-bisphosphate (R15P). Exhibits phosphorylase activity toward CMP and UMP in addition to AMP. Functions in an archaeal AMP degradation pathway, together with R15P isomerase and RubisCO. This is AMP phosphorylase 2 from Archaeoglobus fulgidus (strain ATCC 49558 / DSM 4304 / JCM 9628 / NBRC 100126 / VC-16).